A 447-amino-acid chain; its full sequence is Rab GDP dissociation inhibitor alpha (447 aa).

The protein belongs to the Rab GDI family. Interacts with RHOH. Interacts with the non-phosphorylated forms of RAB1A, RAB3A, RAB5A, RAB5B, RAB5C, RAB8A, RAB8B, RAB10, RAB12, RAB35, and RAB43.

The protein localises to the cytoplasm. It is found in the golgi apparatus. The protein resides in the trans-Golgi network. Functionally, regulates the GDP/GTP exchange reaction of most Rab proteins by inhibiting the dissociation of GDP from them, and the subsequent binding of GTP to them. Promotes the dissociation of GDP-bound Rab proteins from the membrane and inhibits their activation. Promotes the dissociation of RAB1A, RAB3A, RAB5A and RAB10 from membranes. This Pongo pygmaeus (Bornean orangutan) protein is Rab GDP dissociation inhibitor alpha (GDI1).